Here is a 445-residue protein sequence, read N- to C-terminus: Sodium/proton-dependent alanine carrier protein (445 aa).

9 helical membrane-spanning segments follow: residues 41–61 (IAYGGPGAVFWMWVITFIGAA), 103–123 (AAIILSMAVLMPGIQANSIAD), 129–149 (FGIPKLVTGIFVIAVLGFTIF), 159–179 (AEIVVPFMAVGYLFVAIAIIA), 188–208 (VFGLIFKSAFGADQVFGGILG), 249–269 (AFSIYLDVFLVVTATALMILF), 304–324 (TLFPGFGSAFIAIALFFFAFT), 349–369 (AFFALKLVFLAATFYGTVKTA), and 375–395 (MGDIGLGIMVWLNLIAILLLF).

This sequence belongs to the alanine or glycine:cation symporter (AGCS) (TC 2.A.25) family. In terms of processing, the N-terminus is blocked.

It localises to the cell membrane. Mediates the active transport of alanine, driven by either an H(+) or Na(+) gradient. The polypeptide is Sodium/proton-dependent alanine carrier protein (Bacillus sp. (strain PS3)).